A 1019-amino-acid polypeptide reads, in one-letter code: MSIILWSFFLFFTIILSSLTNITTLASFSSLHADELNALKEIATTLGIKRLNLRDEDPCSSKTLKIIQEVDFVPNLDINNTIGCDCSFNNNTICRITELALKTMSLRGKLPPELTKLPYLKSIELCRNYLSGTIPMEWAKMAYLTSISVCANNLSGNLPAGLQNFKNLTFLGVEGNQFSGPIPDELGNLTSLTGLELASNKFTGILPGTLARLVNLERVRICDNNFTGIIPAYIGNWTRLQKLHLYASGLTGPIPDAVVRLENLLELSLSDTTGIKSFPNLSSKGLKRLILRNVGLSGPIPSYIWNLTDLKILDLSFNKLNGIVQGVQNPPKNIYLTGNLLSGNIESGGLLNSQSYIDLSYNNFSWSSSCQKGSTINTYQSSYSKNNLTGLPPCAVPANCKKYQRFLHINCGGEEVSIRNSLGKITYQTDNSRQTNAASNQQFDYWGVSNTGDFTDDNSDHDEYYTSTNLTLSGDYPDLYKTARRSALSLVYYAFCLENGNYNVKLHFMEIQFSDKEVYSRLGRRIFDVYVQGKLFLRDFNINKEANGNMKPVIKEINATVTNHMLEIRLYWAGKGTTLIPKRGNYGPLISAISLCHSQEPLCGVEKTKHHIKYPLILGASGALVTIVLLAVGIYARGIYRRDNNRRERDLRAQGLQTVCFSWRQLQTATNNFDQANKLGEGGFGSVFKGELSDGTIIAVKQLSSKSSQGNREFVNEIGMISGLNHPNLVKLYGCCVERDQLLLVYEYMENNSLALALFGQNSLKLDWAARQKICVGIARGLEFLHDGSAMRMVHRDIKTTNVLLDTDLNAKISDFGLARLHEAEHTHISTKVAGTIGYMAPEYALWGQLTEKADVYSFGVVAMEIVSGKSNTKQQGNADSVSLINWALTLQQTGDILEIVDRMLEGEFNRSEAVRMIKVALVCTNSSPSLRPTMSEAVKMLEGEIEITQVMSDPGIYGHDWSISKLRDIDTHSSSSTSGVTDQTTTTMKSSVSGCDLYPLYPESMILNSTVENSSSSL.

A signal peptide spans 1-19 (MSIILWSFFLFFTIILSSL). The Extracellular segment spans residues 20–615 (TNITTLASFS…EKTKHHIKYP (596 aa)). Residues asparagine 21, asparagine 79, and asparagine 90 are each glycosylated (N-linked (GlcNAc...) asparagine). LRR repeat units lie at residues 93-117 (ICRI…LTKL), 118-141 (PYLK…WAKM), 143-165 (YLTS…LQNF), 166-189 (KNLT…LGNL), 190-212 (TSLT…TLAR), 214-236 (VNLE…YIGN), 237-261 (WTRL…VVRL), 263-283 (NLLE…NLSS), 284-307 (KGLK…IWNL), 308-330 (TDLK…VQNP), 332-351 (KNIY…GGLL), 352-374 (NSQS…QKGS), and 375-398 (TINT…AVPA). N-linked (GlcNAc...) asparagine glycosylation is found at asparagine 153, asparagine 167, and asparagine 188. Residues asparagine 225 and asparagine 236 are each glycosylated (N-linked (GlcNAc...) asparagine). Asparagine 280 and asparagine 306 each carry an N-linked (GlcNAc...) asparagine glycan. N-linked (GlcNAc...) asparagine glycans are attached at residues asparagine 363, asparagine 387, asparagine 469, and asparagine 558. The chain crosses the membrane as a helical span at residues 616–636 (LILGASGALVTIVLLAVGIYA). Over 637 to 1019 (RGIYRRDNNR…STVENSSSSL (383 aa)) the chain is Cytoplasmic. Positions 673–946 (FDQANKLGEG…EAVKMLEGEI (274 aa)) constitute a Protein kinase domain. Residues 679–687 (LGEGGFGSV) and lysine 701 contribute to the ATP site. Tyrosine 746 bears the Phosphotyrosine mark. Aspartate 797 serves as the catalytic Proton acceptor. Serine 830 carries the post-translational modification Phosphoserine. Threonine 831 and threonine 836 each carry phosphothreonine. Position 844 is a phosphotyrosine (tyrosine 844).

Belongs to the protein kinase superfamily. Ser/Thr protein kinase family.

It localises to the cell membrane. It carries out the reaction L-seryl-[protein] + ATP = O-phospho-L-seryl-[protein] + ADP + H(+). It catalyses the reaction L-threonyl-[protein] + ATP = O-phospho-L-threonyl-[protein] + ADP + H(+). The sequence is that of Probable LRR receptor-like serine/threonine-protein kinase At1g29720 (RFK1) from Arabidopsis thaliana (Mouse-ear cress).